Here is a 202-residue protein sequence, read N- to C-terminus: Alpha-latrotoxin-Lm1a (202 aa).

10 ANK repeats span residues 95-109 (LYNAASNPDSAVGFK), 110-120 (LMESPEININE), 122-132 (NDWPVASTLLR), 133-138 (SSNVNV), 142-161 (NSDTPLNLAYFIDQGADINT), 163-170 (NGHLNIVK), 171-182 (YLVEEEDLSVDG), lysine 184, 185-191 (YGIDMTI), and 193-202 (TALDIATDLK). Positions 175-181 (EEDLSVD) are 4C4.1 epitope.

Belongs to the cationic peptide 01 (latrotoxin) family. 03 (alpha-latrotoxin) subfamily. Homotetramer in membranes. In terms of processing, processed by furin-like proteases at both the N- and C-termini. Post-translationally, contains 1 disulfide bond. In terms of tissue distribution, expressed in venom gland, cephalothorax, and abdomen tissues from both males and females.

It is found in the secreted. The protein localises to the target cell membrane. Presynaptic neurotoxin that causes massive release of neurotransmitters from vertebrate (but not invertebrate) nerve terminals and endocrine cells via a complex mechanism involving activation of receptor(s) and toxin insertion into the plasma membrane with subsequent pore formation. Binds to neurexin-1-alpha (NRXN1) in a calcium dependent manner, adhesion G protein-coupled receptor L1 (ADGRL1, also termed latrophilin-1 and calcium-independent receptor of latrotoxin (CIRL)), and receptor-type tyrosine-protein phosphatase S (PTPRS), also termed PTP sigma. NRXN1 and PTPRS are suggested to provide a platform for binding and subsequent pore formation events. In contrast, binding to ADGRL1 does not involve oligomerization and channel formation, but direct downstream stimulation of the synaptic fusion machinery. This is Alpha-latrotoxin-Lm1a from Latrodectus mactans (Black widow spider).